A 116-amino-acid polypeptide reads, in one-letter code: Large ribosomal subunit protein bL20 (116 aa).

This sequence belongs to the bacterial ribosomal protein bL20 family.

Functionally, binds directly to 23S ribosomal RNA and is necessary for the in vitro assembly process of the 50S ribosomal subunit. It is not involved in the protein synthesizing functions of that subunit. In Desulforapulum autotrophicum (strain ATCC 43914 / DSM 3382 / VKM B-1955 / HRM2) (Desulfobacterium autotrophicum), this protein is Large ribosomal subunit protein bL20.